Reading from the N-terminus, the 84-residue chain is Cell division topological specificity factor (84 aa).

The protein belongs to the MinE family.

Functionally, prevents the cell division inhibition by proteins MinC and MinD at internal division sites while permitting inhibition at polar sites. This ensures cell division at the proper site by restricting the formation of a division septum at the midpoint of the long axis of the cell. This is Cell division topological specificity factor from Pseudomonas entomophila (strain L48).